The chain runs to 820 residues: MNSDGRHHQSSSGAPRGPANPGQRGQVPPDDRLTAILPPVTDDRSAPHADSIEAVKAALDGAPPMPPPRDPLEEVTAALAAPPGKPPRGDQLGGRRRPPGPPGPPGSSGQPAGRLPQPRVDLPRVGQINWKWIRRSLYLTAAVVILLPMVTFTMAYLIVDVPKPGDIRTNQVSTILASDGSEIAKIVPPEGNRVDVNLSQVPMHVRQAVIAAEDRNFYSNPGFSFTGFARAVKNNLFGGDLQGGSTITQQYVKNALVGSAQHGWSGLMRKAKELVIATKMSGEWSKDDVLQAYLNIIYFGRGAYGISAASKAYFDKPVEQLTVAEGALLAALIRRPSTLDPAVDPEGAHARWNWVLDGMVETKALSPNDRAAQVFPETVPPDLARAENQTKGPNGLIERQVTRELLELFNIDEQTLNTQGLVVTTTIDPQAQRAAEKAVAKYLDGQDPDMRAAVVSIDPHNGAVRAYYGGDNANGFDFAQAGLQTGSSFKVFALVAALEQGIGLGYQVDSSPLTVDGIKITNVEGEGCGTCNIAEALKMSLNTSYYRLMLKLNGGPQAVADAAHQAGIASSFPGVAHTLSEDGKGGPPNNGIVLGQYQTRVIDMASAYATLAASGIYHPPHFVQKVVSANGQVLFDASTADNTGDQRIPKAVADNVTAAMEPIAGYSRGHNLAGGRDSAAKTGTTQFGDTTANKDAWMVGYTPSLSTAVWVGTVKGDEPLVTASGAAIYGSGLPSDIWKATMDGALKGTSNETFPKPTEVGGYAGVPPPPPPPEVPPSETVIQPTVEIAPGITIPIGPPTTITLAPPPPAPPAATPTPPP.

Residues 1 to 120 are disordered; sequence MNSDGRHHQS…PAGRLPQPRV (120 aa). Over residues 41–53 the composition is skewed to basic and acidic residues; sequence TDDRSAPHADSIE. Residues 139-159 form a helical membrane-spanning segment; it reads LTAAVVILLPMVTFTMAYLIV. The transglycosylase stretch occupies residues 180–360; the sequence is GSEIAKIVPP…RWNWVLDGMV (181 aa). Glu-213 (proton donor; for transglycosylase activity) is an active-site residue. A transpeptidase region spans residues 453–743; sequence AVVSIDPHNG…PSDIWKATMD (291 aa). The active-site Acyl-ester intermediate; for transpeptidase activity is Ser-487. A compositionally biased stretch (low complexity) spans 792-804; it reads ITIPIGPPTTITL. A disordered region spans residues 792 to 820; it reads ITIPIGPPTTITLAPPPPAPPAATPTPPP. The span at 805–820 shows a compositional bias: pro residues; the sequence is APPPPAPPAATPTPPP.

It in the N-terminal section; belongs to the glycosyltransferase 51 family. In the C-terminal section; belongs to the transpeptidase family. Interacts with RipA via its transpeptidase domain (residues 561-820).

It is found in the cell membrane. The catalysed reaction is [GlcNAc-(1-&gt;4)-Mur2Ac(oyl-L-Ala-gamma-D-Glu-L-Lys-D-Ala-D-Ala)](n)-di-trans,octa-cis-undecaprenyl diphosphate + beta-D-GlcNAc-(1-&gt;4)-Mur2Ac(oyl-L-Ala-gamma-D-Glu-L-Lys-D-Ala-D-Ala)-di-trans,octa-cis-undecaprenyl diphosphate = [GlcNAc-(1-&gt;4)-Mur2Ac(oyl-L-Ala-gamma-D-Glu-L-Lys-D-Ala-D-Ala)](n+1)-di-trans,octa-cis-undecaprenyl diphosphate + di-trans,octa-cis-undecaprenyl diphosphate + H(+). It carries out the reaction Preferential cleavage: (Ac)2-L-Lys-D-Ala-|-D-Ala. Also transpeptidation of peptidyl-alanyl moieties that are N-acyl substituents of D-alanine.. The protein operates within cell wall biogenesis; peptidoglycan biosynthesis. In terms of biological role, cell wall formation. Synthesis of cross-linked peptidoglycan from the lipid intermediates. The enzyme has a penicillin-insensitive transglycosylase N-terminal domain (formation of linear glycan strands) and a penicillin-sensitive transpeptidase C-terminal domain (cross-linking of the peptide subunits). Has little peptidoglycan hydrolytic activity; however it inhibits the synergistic peptidoglycan hydrolysis of RipA plus RpfB. The protein is Penicillin-binding protein 1A (ponA1) of Mycobacterium tuberculosis (strain ATCC 25618 / H37Rv).